A 101-amino-acid chain; its full sequence is uncharacterized protein (101 aa).

Transmembrane regions (helical) follow at residues 3 to 23 (IIGS…AIIF) and 68 to 88 (VIVL…IIVI).

It is found in the cell membrane. This is an uncharacterized protein from Ureaplasma parvum serovar 3 (strain ATCC 700970).